The primary structure comprises 285 residues: Phosphatidylserine decarboxylase proenzyme (285 aa).

Active-site charge relay system; for autoendoproteolytic cleavage activity residues include D89, H146, and S252. The Schiff-base intermediate with substrate; via pyruvic acid; for decarboxylase activity role is filled by S252. A Pyruvic acid (Ser); by autocatalysis modification is found at S252.

It belongs to the phosphatidylserine decarboxylase family. PSD-B subfamily. Prokaryotic type I sub-subfamily. Heterodimer of a large membrane-associated beta subunit and a small pyruvoyl-containing alpha subunit. The cofactor is pyruvate. Post-translationally, is synthesized initially as an inactive proenzyme. Formation of the active enzyme involves a self-maturation process in which the active site pyruvoyl group is generated from an internal serine residue via an autocatalytic post-translational modification. Two non-identical subunits are generated from the proenzyme in this reaction, and the pyruvate is formed at the N-terminus of the alpha chain, which is derived from the carboxyl end of the proenzyme. The autoendoproteolytic cleavage occurs by a canonical serine protease mechanism, in which the side chain hydroxyl group of the serine supplies its oxygen atom to form the C-terminus of the beta chain, while the remainder of the serine residue undergoes an oxidative deamination to produce ammonia and the pyruvoyl prosthetic group on the alpha chain. During this reaction, the Ser that is part of the protease active site of the proenzyme becomes the pyruvoyl prosthetic group, which constitutes an essential element of the active site of the mature decarboxylase.

It localises to the cell membrane. The enzyme catalyses a 1,2-diacyl-sn-glycero-3-phospho-L-serine + H(+) = a 1,2-diacyl-sn-glycero-3-phosphoethanolamine + CO2. Its pathway is phospholipid metabolism; phosphatidylethanolamine biosynthesis; phosphatidylethanolamine from CDP-diacylglycerol: step 2/2. Its function is as follows. Catalyzes the formation of phosphatidylethanolamine (PtdEtn) from phosphatidylserine (PtdSer). The protein is Phosphatidylserine decarboxylase proenzyme of Vibrio campbellii (strain ATCC BAA-1116).